The primary structure comprises 337 residues: Terpene synthase 4 (337 aa).

Residues Asp-94 and Asp-98 each contribute to the Mg(2+) site. A D(D/E)XX(D/E) motif motif is present at residues 94 to 98 (DDIFD). Substrate is bound at residue Arg-195. Residues Asn-241, Ser-245, and Glu-249 each contribute to the Mg(2+) site. The short motif at 241–249 (NDIYSYHRE) is the NSE motif element. Residues 320–327 (WSESCTRY) carry the WxxxxxRY motif motif.

Belongs to the terpene synthase family. The cofactor is Mg(2+).

It catalyses the reaction (2E,6E)-farnesyl diphosphate = alpha-muurolene + diphosphate. The enzyme catalyses (2E,6E)-farnesyl diphosphate = (-)-(E)-beta-caryophyllene + diphosphate. Terpene synthase that catalyzes the cyclization of farnesyl diphosphate (FPP) into alpha-muurolene, (-)-beta-caryophyllene, and one unidentified sesquiterpene. TPS4 shows only trace monoterpene synthase activity with geranyl diphosphate (GPP) as substrate and produces very small amounts of myrcene. P.polycephalum has a unique biology and these volatile terpenoids could function in internal communication of P.polycephalum, to mark the territory that have been explored, or they may be involved in chemotaxis. The sequence is that of Terpene synthase 4 from Physarum polycephalum (Slime mold).